Consider the following 119-residue polypeptide: Large ribosomal subunit protein uL18 (119 aa).

This sequence belongs to the universal ribosomal protein uL18 family. As to quaternary structure, part of the 50S ribosomal subunit; part of the 5S rRNA/L5/L18/L25 subcomplex. Contacts the 5S and 23S rRNAs.

Functionally, this is one of the proteins that bind and probably mediate the attachment of the 5S RNA into the large ribosomal subunit, where it forms part of the central protuberance. The sequence is that of Large ribosomal subunit protein uL18 from Clostridium botulinum (strain Loch Maree / Type A3).